The sequence spans 396 residues: NADH-quinone oxidoreductase subunit D (396 aa).

It belongs to the complex I 49 kDa subunit family. In terms of assembly, NDH-1 is composed of 14 different subunits. Subunits NuoB, C, D, E, F, and G constitute the peripheral sector of the complex.

Its subcellular location is the cell inner membrane. It carries out the reaction a quinone + NADH + 5 H(+)(in) = a quinol + NAD(+) + 4 H(+)(out). NDH-1 shuttles electrons from NADH, via FMN and iron-sulfur (Fe-S) centers, to quinones in the respiratory chain. The immediate electron acceptor for the enzyme in this species is believed to be ubiquinone. Couples the redox reaction to proton translocation (for every two electrons transferred, four hydrogen ions are translocated across the cytoplasmic membrane), and thus conserves the redox energy in a proton gradient. This Bartonella quintana (strain Toulouse) (Rochalimaea quintana) protein is NADH-quinone oxidoreductase subunit D.